Consider the following 167-residue polypeptide: Ubiquitin-fold modifier-conjugating enzyme 1 (167 aa).

Cys-116 serves as the catalytic Glycyl thioester intermediate. Lys-122 is covalently cross-linked (Glycyl lysine isopeptide (Lys-Gly) (interchain with G-Cter in UFM1)).

This sequence belongs to the ubiquitin-conjugating enzyme family. UFC1 subfamily. In terms of assembly, interacts with UBA5 (via C-terminus). Interacts with UFL1. Interacts with UFM1. Interacts with KIRREL3. Post-translationally, ufmylated at Lys-122. Deufmylated by UFSP1.

Its function is as follows. E2-like enzyme which specifically catalyzes the second step in ufmylation. Accepts the ubiquitin-like modifier UFM1 from the E1 enzyme UBA5 and forms an intermediate with UFM1 via a thioester linkage. Ufmylation is involved in various processes, such as ribosome recycling, response to DNA damage, interferon response or reticulophagy (also called ER-phagy). The polypeptide is Ubiquitin-fold modifier-conjugating enzyme 1 (Rattus norvegicus (Rat)).